A 223-amino-acid polypeptide reads, in one-letter code: Phosphoribosylformylglycinamidine synthase subunit PurQ (223 aa).

In terms of domain architecture, Glutamine amidotransferase type-1 spans 3–223; it reads FAVLVFPGSN…MVKSWREQHV (221 aa). Cys85 acts as the Nucleophile in catalysis. Active-site residues include His193 and Glu195.

Part of the FGAM synthase complex composed of 1 PurL, 1 PurQ and 2 PurS subunits.

It is found in the cytoplasm. It carries out the reaction N(2)-formyl-N(1)-(5-phospho-beta-D-ribosyl)glycinamide + L-glutamine + ATP + H2O = 2-formamido-N(1)-(5-O-phospho-beta-D-ribosyl)acetamidine + L-glutamate + ADP + phosphate + H(+). It catalyses the reaction L-glutamine + H2O = L-glutamate + NH4(+). It functions in the pathway purine metabolism; IMP biosynthesis via de novo pathway; 5-amino-1-(5-phospho-D-ribosyl)imidazole from N(2)-formyl-N(1)-(5-phospho-D-ribosyl)glycinamide: step 1/2. Part of the phosphoribosylformylglycinamidine synthase complex involved in the purines biosynthetic pathway. Catalyzes the ATP-dependent conversion of formylglycinamide ribonucleotide (FGAR) and glutamine to yield formylglycinamidine ribonucleotide (FGAM) and glutamate. The FGAM synthase complex is composed of three subunits. PurQ produces an ammonia molecule by converting glutamine to glutamate. PurL transfers the ammonia molecule to FGAR to form FGAM in an ATP-dependent manner. PurS interacts with PurQ and PurL and is thought to assist in the transfer of the ammonia molecule from PurQ to PurL. The sequence is that of Phosphoribosylformylglycinamidine synthase subunit PurQ from Staphylococcus aureus (strain MRSA252).